The primary structure comprises 450 residues: Bifunctional protein GlmU (450 aa).

The interval Met1–Arg221 is pyrophosphorylase. UDP-N-acetyl-alpha-D-glucosamine contacts are provided by residues Leu6–Gly9, Lys20, Gln69, Gly74–Thr75, Tyr96–Asp98, Gly135, Glu150, Asn165, and Asn219. Asp98 provides a ligand contact to Mg(2+). Asn219 lines the Mg(2+) pocket. Residues Ile222–Lys242 form a linker region. The interval Gly243 to Asp450 is N-acetyltransferase. Residues Arg324 and Lys342 each contribute to the UDP-N-acetyl-alpha-D-glucosamine site. His354 serves as the catalytic Proton acceptor. Residues Tyr357 and Asn368 each contribute to the UDP-N-acetyl-alpha-D-glucosamine site. Acetyl-CoA contacts are provided by Ala371, Ser396, Ala414, and Arg431.

It in the N-terminal section; belongs to the N-acetylglucosamine-1-phosphate uridyltransferase family. This sequence in the C-terminal section; belongs to the transferase hexapeptide repeat family. In terms of assembly, homotrimer. The cofactor is Mg(2+).

It is found in the cytoplasm. The catalysed reaction is alpha-D-glucosamine 1-phosphate + acetyl-CoA = N-acetyl-alpha-D-glucosamine 1-phosphate + CoA + H(+). It catalyses the reaction N-acetyl-alpha-D-glucosamine 1-phosphate + UTP + H(+) = UDP-N-acetyl-alpha-D-glucosamine + diphosphate. The protein operates within nucleotide-sugar biosynthesis; UDP-N-acetyl-alpha-D-glucosamine biosynthesis; N-acetyl-alpha-D-glucosamine 1-phosphate from alpha-D-glucosamine 6-phosphate (route II): step 2/2. Its pathway is nucleotide-sugar biosynthesis; UDP-N-acetyl-alpha-D-glucosamine biosynthesis; UDP-N-acetyl-alpha-D-glucosamine from N-acetyl-alpha-D-glucosamine 1-phosphate: step 1/1. It participates in bacterial outer membrane biogenesis; LPS lipid A biosynthesis. Functionally, catalyzes the last two sequential reactions in the de novo biosynthetic pathway for UDP-N-acetylglucosamine (UDP-GlcNAc). The C-terminal domain catalyzes the transfer of acetyl group from acetyl coenzyme A to glucosamine-1-phosphate (GlcN-1-P) to produce N-acetylglucosamine-1-phosphate (GlcNAc-1-P), which is converted into UDP-GlcNAc by the transfer of uridine 5-monophosphate (from uridine 5-triphosphate), a reaction catalyzed by the N-terminal domain. The protein is Bifunctional protein GlmU of Pseudothermotoga lettingae (strain ATCC BAA-301 / DSM 14385 / NBRC 107922 / TMO) (Thermotoga lettingae).